The following is a 34-amino-acid chain: Non-toxic venom protein (34 aa).

The LCN-type CS-alpha/beta domain maps to 1–34; the sequence is KEGYPTNSEGCKITXLFNDPYCKGXCINLSTQAD.

As to expression, expressed by the venom gland.

Its subcellular location is the secreted. Does not cause symptoms of intoxication, paralysis or death in insects (A.domestica). The chain is Non-toxic venom protein from Rhopalurus junceus (Caribbean blue scorpion).